A 320-amino-acid chain; its full sequence is Aspartate carbamoyltransferase catalytic subunit (320 aa).

Carbamoyl phosphate-binding residues include R53 and T54. Residue K82 participates in L-aspartate binding. Carbamoyl phosphate is bound by residues R103, H131, and Q134. Residues R164 and R227 each coordinate L-aspartate. Positions 266 and 267 each coordinate carbamoyl phosphate.

It belongs to the aspartate/ornithine carbamoyltransferase superfamily. ATCase family. As to quaternary structure, heterododecamer (2C3:3R2) of six catalytic PyrB chains organized as two trimers (C3), and six regulatory PyrI chains organized as three dimers (R2).

It carries out the reaction carbamoyl phosphate + L-aspartate = N-carbamoyl-L-aspartate + phosphate + H(+). It participates in pyrimidine metabolism; UMP biosynthesis via de novo pathway; (S)-dihydroorotate from bicarbonate: step 2/3. Catalyzes the condensation of carbamoyl phosphate and aspartate to form carbamoyl aspartate and inorganic phosphate, the committed step in the de novo pyrimidine nucleotide biosynthesis pathway. This is Aspartate carbamoyltransferase catalytic subunit from Bifidobacterium longum (strain NCC 2705).